We begin with the raw amino-acid sequence, 288 residues long: MDVTAKYELIGLMAYPIRHSLSPEMQNKALEKAGLPFTYMAFEVDNDSFPGAIEGLKALKMRGTGVSMPNKQLACEYVDELTPAAKLVGAINTIVNDDGYLRGYNTDGTGHIRAIKESGFDIKGKTMVLLGAGGASTAIGAQGAIEGLKEIKLFNRRDKFFDKALAFAQRVNENTDCVVTVTDLADQQAFAEALASADILTNGTKVGMKPLENKSLVNDISLLHPGLLVTECVYNPHMTKLLQQAQQAGCKTIDGYGMLLWQGAEQFTLWTGKDFPLEYVKQVMGFGA.

The substrate site is built by K71 and D107. Residues 132–135 (AGGA), 155–158 (NRRD), K205, 232–235 (CVYN), and G255 each bind NAD(+).

It belongs to the shikimate dehydrogenase family. In terms of assembly, homodimer.

The enzyme catalyses L-quinate + NAD(+) = 3-dehydroquinate + NADH + H(+). It catalyses the reaction L-quinate + NADP(+) = 3-dehydroquinate + NADPH + H(+). The catalysed reaction is shikimate + NADP(+) = 3-dehydroshikimate + NADPH + H(+). It carries out the reaction shikimate + NAD(+) = 3-dehydroshikimate + NADH + H(+). The protein operates within metabolic intermediate biosynthesis; chorismate biosynthesis; chorismate from D-erythrose 4-phosphate and phosphoenolpyruvate: step 4/7. The actual biological function of YdiB remains unclear, nor is it known whether 3-dehydroshikimate or quinate represents the natural substrate. Catalyzes the reversible NAD-dependent reduction of both 3-dehydroshikimate (DHSA) and 3-dehydroquinate to yield shikimate (SA) and quinate, respectively. It can use both NAD or NADP for catalysis, however it has higher catalytic efficiency with NAD. This Escherichia coli O157:H7 protein is Quinate/shikimate dehydrogenase.